Here is a 461-residue protein sequence, read N- to C-terminus: Anthocyanidin 3-O-glucoside 5-O-glucosyltransferase (461 aa).

The N-terminal stretch at 1-15 (MSRAHVLLATFPAQG) is a signal peptide. The Proton acceptor role is filled by His-16. An anthocyanidin is bound at residue His-16. Residues Gln-338, His-353, Trp-356, Asn-357, Ser-358, Glu-361, Asp-377, and Gln-378 each coordinate UDP-alpha-D-glucose.

Belongs to the UDP-glycosyltransferase family.

It catalyses the reaction an anthocyanidin 3-O-beta-D-glucoside + UDP-alpha-D-glucose = an anthocyanidin 3,5-di-O-beta-D-glucoside + UDP + 2 H(+). Its pathway is pigment biosynthesis; anthocyanin biosynthesis. Its function is as follows. Catalyzes the glucosylation at the O-5 position of anthocyanidin 3-glucosides to form anthocyanidin 3,5-di-O-glucosides using UDP-glucose as sugar donor. Anthocyanidin 3,5-di-O-glucosides are molecules that are responsible for pigmentation. Also acts on anthocyanidin 3-O-(6-O-malonylglucoside). Much less active with hydroxycinnamoylglucose derivatives. No activity in the absence of the 3-O-glucoside group. The polypeptide is Anthocyanidin 3-O-glucoside 5-O-glucosyltransferase (HGT8) (Verbena hybrida (Garden vervain)).